A 742-amino-acid chain; its full sequence is Phosphatidylinositol 4-phosphate 5-kinase its3 (742 aa).

2 disordered regions span residues 1 to 21 and 82 to 228; these read MKIDSNGIVNPHSITNEIPSY and LFKE…PDIG. Composition is skewed to low complexity over residues 90–105 and 129–142; these read PSNPTAHSPSSSSNDS and PSSNSSSSPQLQNL. Polar residues-rich tracts occupy residues 158–181 and 193–218; these read RSSSNPVTSSQQPPNDRSTLSSSQ and EKNSSNAEPSGSRSGDRGTNVSTSGS. The PIPK domain maps to 264-662; it reads GHENYVTAYN…RFYKFVESSI (399 aa). A disordered region spans residues 677-742; it reads QDGQRVNKQQ…RNVTTNTSSS (66 aa). A compositionally biased stretch (polar residues) spans 680–719; the sequence is QRVNKQQSVNAGNVRTNNKHGSLNNNTAPSSRNAKSTSAH.

In terms of assembly, interacts with opy1 (via domain PH 1); the interaction is direct but opy1 does not appear to regulate its3 localization or function. In terms of processing, phosphorylated by casein kinase I. Phosphorylation inactivates the enzyme.

Its subcellular location is the cell membrane. The catalysed reaction is a 1,2-diacyl-sn-glycero-3-phospho-(1D-myo-inositol 4-phosphate) + ATP = a 1,2-diacyl-sn-glycero-3-phospho-(1D-myo-inositol-4,5-bisphosphate) + ADP + H(+). Catalyzes the phosphorylation of phosphatidylinositol 4-phosphate on the fifth hydroxyl of the myo-inositol ring, to form phosphatidylinositol 4,5-bisphosphate. Involved, together with the calcineurin ppb1, in cytokinesis. The protein is Phosphatidylinositol 4-phosphate 5-kinase its3 (its3) of Schizosaccharomyces pombe (strain 972 / ATCC 24843) (Fission yeast).